Reading from the N-terminus, the 178-residue chain is Large ribosomal subunit protein uL5 (178 aa).

Position 2 is an N-acetylalanine (Ala-2). Lys-38 participates in a covalent cross-link: Glycyl lysine isopeptide (Lys-Gly) (interchain with G-Cter in SUMO2). Residues Thr-44 and Thr-47 each carry the phosphothreonine modification. Residue Lys-52 is modified to N6-acetyllysine; alternate. Lys-52 is covalently cross-linked (Glycyl lysine isopeptide (Lys-Gly) (interchain with G-Cter in SUMO2); alternate). Residue Lys-85 is modified to N6-acetyllysine. Lys-154 participates in a covalent cross-link: Glycyl lysine isopeptide (Lys-Gly) (interchain with G-Cter in SUMO2).

The protein belongs to the universal ribosomal protein uL5 family. As to quaternary structure, component of the large ribosomal subunit (LSU). Part of the 5S RNP complex, which is a LSU subcomplex composed of the 5S RNA, RPL5 and RPL11. Component of a hexameric 5S RNP precursor complex, composed of 5S RNA, RRS1, RPF2/BXDC1, RPL5, RPL11 and HEATR3; this complex acts as a precursor for ribosome assembly. Interacts with PML. Interacts with MDM2 (via its RanBP2-type zinc finger domain); negatively regulates MDM2-mediated TP53 ubiquitination and degradation. Interacts with NOP53; retains RPL11 into the nucleolus.

The protein resides in the nucleus. It is found in the nucleolus. The protein localises to the cytoplasm. Its function is as follows. Component of the ribosome, a large ribonucleoprotein complex responsible for the synthesis of proteins in the cell. The small ribosomal subunit (SSU) binds messenger RNAs (mRNAs) and translates the encoded message by selecting cognate aminoacyl-transfer RNA (tRNA) molecules. The large subunit (LSU) contains the ribosomal catalytic site termed the peptidyl transferase center (PTC), which catalyzes the formation of peptide bonds, thereby polymerizing the amino acids delivered by tRNAs into a polypeptide chain. The nascent polypeptides leave the ribosome through a tunnel in the LSU and interact with protein factors that function in enzymatic processing, targeting, and the membrane insertion of nascent chains at the exit of the ribosomal tunnel. As part of the 5S RNP/5S ribonucleoprotein particle it is an essential component of the LSU, required for its formation and the maturation of rRNAs. It also couples ribosome biogenesis to p53/TP53 activation. As part of the 5S RNP it accumulates in the nucleoplasm and inhibits MDM2, when ribosome biogenesis is perturbed, mediating the stabilization and the activation of TP53. Promotes nucleolar location of PML. The polypeptide is Large ribosomal subunit protein uL5 (RPL11) (Pongo abelii (Sumatran orangutan)).